The primary structure comprises 103 residues: MYAVFQSGGKQHRVSEGQVVRLEKLEIATGEKVEFDSVLMVVNGEDVKIGAPVVAGAKVVAEVVAQGRGDKVKIVKFRRRKHSRKQQGHRQWFTEVKITGIQA.

The protein belongs to the bacterial ribosomal protein bL21 family. As to quaternary structure, part of the 50S ribosomal subunit. Contacts protein L20.

In terms of biological role, this protein binds to 23S rRNA in the presence of protein L20. This Actinobacillus pleuropneumoniae serotype 5b (strain L20) protein is Large ribosomal subunit protein bL21.